Reading from the N-terminus, the 92-residue chain is Precursor of CEP12 (92 aa).

The N-terminal stretch at M1 to A30 is a signal peptide. Residues A31 to T70 constitute a propeptide that is removed on maturation. The segment at T70–P92 is disordered. Hydroxyproline is present on residues P74 and P79. The propeptide occupies K86 to P92.

The protein belongs to the C-terminally encoded plant signaling peptide (CEP) family. As to quaternary structure, interacts with CEP receptors (e.g. CEPR1 and CEPR2). Post-translationally, the mature small signaling peptide is generated by proteolytic processing of the longer precursor.

The protein localises to the secreted. Its subcellular location is the extracellular space. The protein resides in the apoplast. Its function is as follows. Extracellular signaling peptide that may regulate primary root growth rate and systemic nitrogen (N)-demand signaling. This chain is Precursor of CEP12, found in Arabidopsis thaliana (Mouse-ear cress).